Consider the following 526-residue polypeptide: Na(+)/H(+) antiporter NhaB (526 aa).

A run of 10 helical transmembrane segments spans residues 13–33 (FLGQ…VVNP), 98–118 (LLLI…LFVF), 133–155 (LAFC…VAVV), 208–228 (LLMH…VGEP), 244–264 (FFLR…LVCL), 309–329 (ALIG…VGLI), 355–375 (EALP…VIIE), 395–415 (LALF…VFVG), 452–472 (VATP…LAPL), and 481–501 (VWMA…CVQF).

The protein belongs to the NhaB Na(+)/H(+) (TC 2.A.34) antiporter family.

Its subcellular location is the cell inner membrane. The enzyme catalyses 2 Na(+)(in) + 3 H(+)(out) = 2 Na(+)(out) + 3 H(+)(in). In terms of biological role, na(+)/H(+) antiporter that extrudes sodium in exchange for external protons. In Serratia proteamaculans (strain 568), this protein is Na(+)/H(+) antiporter NhaB.